Reading from the N-terminus, the 173-residue chain is MPDLSLYKQTVDLYLSIAPGHSRDPLNAIQEHMDSMILSKLPRINGIVLAYDNIRFLEKSAKVMYDSPFSFIWVRVDVLVFSPKKGDCLEGKINLVSPSHIGLLILGIFNASIPRKSIPKDWIFIEPDTTEEQGRWKTNDGNILEPGKDLEFVVDGIQREAGLTMVQGTLANS.

It belongs to the eukaryotic RPA43 RNA polymerase subunit family. Component of the RNA polymerase I (Pol I) complex consisting of 14 subunits. Part of a Pol I subcomplex consisting of the subunits A14 and A43. Interacts with ker1/A14. Post-translationally, contains an average of four phosphates per molecule.

The protein resides in the nucleus. It localises to the nucleolus. DNA-dependent RNA polymerase catalyzes the transcription of DNA into RNA using the four ribonucleoside triphosphates as substrates. Component of RNA polymerase I which synthesizes ribosomal RNA precursors. May be involved in recruitment of Pol I to rDNA promoters. The polypeptide is DNA-directed RNA polymerase I subunit rpa43 (rpa43) (Schizosaccharomyces pombe (strain 972 / ATCC 24843) (Fission yeast)).